Reading from the N-terminus, the 113-residue chain is Putative glycerol transporter Lin0367 (113 aa).

Transmembrane regions (helical) follow at residues 3–23, 30–50, 63–83, and 92–112; these read IGIA…IRMM, EWGA…VWTI, GTVW…ASLL, and VVNL…LSLF.

The protein resides in the membrane. In terms of biological role, could be involved in the glycerol uptake either via facilitated diffusion or active transport. The chain is Putative glycerol transporter Lin0367 from Listeria innocua serovar 6a (strain ATCC BAA-680 / CLIP 11262).